A 263-amino-acid chain; its full sequence is Acetyl-coenzyme A carboxylase carboxyl transferase subunit beta (263 aa).

One can recognise a CoA carboxyltransferase N-terminal domain in the interval 1 to 263 (MDCPSCKVSY…LKETPKKKKA (263 aa)). The Zn(2+) site is built by Cys-3, Cys-6, Cys-22, and Cys-25. The segment at 3-25 (CPSCKVSYDEEVFTDNLMVCPHC) adopts a C4-type zinc-finger fold.

The protein belongs to the AccD/PCCB family. As to quaternary structure, acetyl-CoA carboxylase is a heterohexamer composed of biotin carboxyl carrier protein (AccB), biotin carboxylase (AccC) and two subunits each of ACCase subunit alpha (AccA) and ACCase subunit beta (AccD). Requires Zn(2+) as cofactor.

The protein localises to the cytoplasm. The enzyme catalyses N(6)-carboxybiotinyl-L-lysyl-[protein] + acetyl-CoA = N(6)-biotinyl-L-lysyl-[protein] + malonyl-CoA. The protein operates within lipid metabolism; malonyl-CoA biosynthesis; malonyl-CoA from acetyl-CoA: step 1/1. Component of the acetyl coenzyme A carboxylase (ACC) complex. Biotin carboxylase (BC) catalyzes the carboxylation of biotin on its carrier protein (BCCP) and then the CO(2) group is transferred by the transcarboxylase to acetyl-CoA to form malonyl-CoA. The polypeptide is Acetyl-coenzyme A carboxylase carboxyl transferase subunit beta (Treponema denticola (strain ATCC 35405 / DSM 14222 / CIP 103919 / JCM 8153 / KCTC 15104)).